A 324-amino-acid chain; its full sequence is MSVEDGGVPGLARPRQARWTLLLFLSTAMYGAHAPFLALCHVDGRVPFRPSSAVLLTELTKLLLCAFSLLVGWQTWPQGTPPWRQAVPFALSALLYGANNNLVIYLQRYMDPSTYQVLSNLKIGSTALLYCLCLGHRLSARQGLALLLLMAAGACYASGGFQEPVNTLPGPASAAGAHPMPLHITPLGLLLLILYCLISGLSSVYTELIMKRQRLPLALQNLFLYTFGVILNFGLYAGSGPGPGFLEGFSGWAVLVVLNQAVNGLLMSAVMKHGSSITRLFIVSCSLVVNAVLSAVLLQLQLTAIFFLAALLIGLAVCLYYGSP.

The Cytoplasmic portion of the chain corresponds to 1–18 (MSVEDGGVPGLARPRQAR). The chain crosses the membrane as a helical span at residues 19 to 39 (WTLLLFLSTAMYGAHAPFLAL). At 40–52 (CHVDGRVPFRPSS) the chain is on the lumenal side. Residues 53–73 (AVLLTELTKLLLCAFSLLVGW) form a helical membrane-spanning segment. The Cytoplasmic segment spans residues 74–85 (QTWPQGTPPWRQ). A helical transmembrane segment spans residues 86–106 (AVPFALSALLYGANNNLVIYL). The Lumenal segment spans residues 107 to 142 (QRYMDPSTYQVLSNLKIGSTALLYCLCLGHRLSARQ). A helical membrane pass occupies residues 143–163 (GLALLLLMAAGACYASGGFQE). Residues 164–180 (PVNTLPGPASAAGAHPM) are Cytoplasmic-facing. The helical transmembrane segment at 181 to 201 (PLHITPLGLLLLILYCLISGL) threads the bilayer. Over 202 to 214 (SSVYTELIMKRQR) the chain is Lumenal. Residues 215 to 235 (LPLALQNLFLYTFGVILNFGL) traverse the membrane as a helical segment. Residues 236-248 (YAGSGPGPGFLEG) are Cytoplasmic-facing. The helical transmembrane segment at 249-271 (FSGWAVLVVLNQAVNGLLMSAVM) threads the bilayer. The Lumenal portion of the chain corresponds to 272–279 (KHGSSITR). Residues 280 to 300 (LFIVSCSLVVNAVLSAVLLQL) form a helical membrane-spanning segment. Residues 301–324 (QLTAIFFLAALLIGLAVCLYYGSP) are Cytoplasmic-facing.

The protein belongs to the nucleotide-sugar transporter family. SLC35A subfamily. Found in a complex with SLC35A2 and SLC35A3.

The protein resides in the golgi apparatus membrane. It carries out the reaction CDP-L-ribitol(in) + CDP(out) = CDP-L-ribitol(out) + CDP(in). In terms of biological role, mediates the transport of CDP-ribitol. Does not exhibit CMP-sialic acid, UDP-galactose and UDP-N-acetylglucosamine transport activity. The chain is Probable UDP-sugar transporter protein SLC35A4 from Mus musculus (Mouse).